Consider the following 259-residue polypeptide: Pimeloyl-[acyl-carrier protein] methyl ester esterase (259 aa).

The AB hydrolase-1 domain occupies Leu16–Pro244. Substrate contacts are provided by residues Trp22, Ser82–Leu83, and Phe143–Gln147. The active-site Nucleophile is Ser82. Catalysis depends on residues Asp207 and His237. His237 contacts substrate.

Belongs to the AB hydrolase superfamily. Carboxylesterase BioH family. In terms of assembly, monomer.

It localises to the cytoplasm. The enzyme catalyses 6-carboxyhexanoyl-[ACP] methyl ester + H2O = 6-carboxyhexanoyl-[ACP] + methanol + H(+). It participates in cofactor biosynthesis; biotin biosynthesis. Its function is as follows. The physiological role of BioH is to remove the methyl group introduced by BioC when the pimeloyl moiety is complete. It allows to synthesize pimeloyl-ACP via the fatty acid synthetic pathway through the hydrolysis of the ester bonds of pimeloyl-ACP esters. This Wigglesworthia glossinidia brevipalpis protein is Pimeloyl-[acyl-carrier protein] methyl ester esterase.